The primary structure comprises 177 residues: LOB domain-containing protein 33 (177 aa).

Residues S6–M108 form the LOB domain.

It belongs to the LOB domain-containing protein family. As to expression, expressed in roots.

In Arabidopsis thaliana (Mouse-ear cress), this protein is LOB domain-containing protein 33 (LBD33).